Reading from the N-terminus, the 522-residue chain is 4-chlorobenzoate--CoA ligase (522 aa).

Residues 161 to 169, 300 to 305, and N410 contribute to the ATP site; these read TSGTTGLPK and DIYGTT.

Belongs to the ATP-dependent AMP-binding enzyme family. Homodimer. Mg(2+) serves as cofactor.

It catalyses the reaction 4-chlorobenzoate + ATP + CoA = 4-chlorobenzoyl-CoA + AMP + diphosphate. It participates in xenobiotic degradation; 4-chlorobenzoate degradation; 4-hydroxybenzoate from 4-chlorobenzoate: step 2/3. Functionally, catalyzes the formation of chlorobenzoyl-CoA via a 2 step reaction. First 4-chlorobenzoate is adenylated by ATP, followed by acyl transfer from the 4-chlorobenzoyl-AMP intermediate to CoA. Benzoate, 4-bromobenzoate, 4-iodobenzoate and 4-fluorobenzoate also act as substrates. Inactive towards 4-nitrobenzoate. This is 4-chlorobenzoate--CoA ligase from Arthrobacter sp.